A 488-amino-acid chain; its full sequence is Catalase (488 aa).

Residues 1–24 (MTDRRNLTTNQGVPIGDNQNSMTA) form a disordered region. The span at 7–23 (LTTNQGVPIGDNQNSMT) shows a compositional bias: polar residues. Active-site residues include His-55 and Asn-128. Residue Tyr-338 participates in heme binding.

The protein belongs to the catalase family. It depends on heme as a cofactor.

The protein resides in the cytoplasm. It carries out the reaction 2 H2O2 = O2 + 2 H2O. Its function is as follows. Decomposes hydrogen peroxide into water and oxygen; serves to protect cells from the toxic effects of hydrogen peroxide. The polypeptide is Catalase (kat) (Listeria seeligeri).